The following is a 702-amino-acid chain: K(+)-insensitive pyrophosphate-energized proton pump (702 aa).

Helical transmembrane passes span 3–23 (GIYL…ALTI), 63–83 (AVVF…GFLI), 130–150 (MLVA…LVGI), and 162–182 (VALG…GGIF). Lys-184 contacts substrate. Mg(2+) contacts are provided by Asp-187, Asp-191, Asn-214, and Asp-217. 6 consecutive transmembrane segments (helical) span residues 234–254 (AVTV…VPAM), 255–275 (TSMM…SILG), 294–314 (GFLV…AIVP), 329–349 (GFDL…LIWV), 379–399 (GLAI…AAII), and 407–427 (LFGI…VVAL). Asp-435 is a binding site for Mg(2+). The next 4 helical transmembrane spans lie at 466-486 (AVTK…LFAA), 517-537 (YVVV…SMGM), 586-606 (IIPS…ILGI), and 612-632 (AFSA…FVAI). 3 residues coordinate Ca(2+): Asp-642, Asp-668, and Asp-672. Lys-675 is a substrate binding site.

It belongs to the H(+)-translocating pyrophosphatase (TC 3.A.10) family. K(+)-insensitive subfamily. In terms of assembly, homodimer. Requires Mg(2+) as cofactor.

It is found in the cell inner membrane. It carries out the reaction diphosphate + H2O + H(+)(in) = 2 phosphate + 2 H(+)(out). Proton pump that utilizes the energy of pyrophosphate hydrolysis as the driving force for proton movement across the membrane. Generates a proton motive force. The sequence is that of K(+)-insensitive pyrophosphate-energized proton pump from Rhodospirillum rubrum (strain ATCC 11170 / ATH 1.1.1 / DSM 467 / LMG 4362 / NCIMB 8255 / S1).